Reading from the N-terminus, the 424-residue chain is Tyrosine--tRNA ligase (424 aa).

Residue Y37 participates in L-tyrosine binding. The 'HIGH' region motif lies at 42–51 (PTADSLHLGH). K144 carries the post-translational modification N6-acetyllysine. L-tyrosine-binding residues include Y175 and Q179. The 'KMSKS' region motif lies at 235–239 (KFGKT). ATP is bound at residue K238. Residues 357–414 (ADLMQALVDSELQPSRGQARKTIASNAITINGEKQSDPEYFFKEEDRLFGRFTLLRRG) enclose the S4 RNA-binding domain.

It belongs to the class-I aminoacyl-tRNA synthetase family. TyrS type 1 subfamily. As to quaternary structure, homodimer.

Its subcellular location is the cytoplasm. The catalysed reaction is tRNA(Tyr) + L-tyrosine + ATP = L-tyrosyl-tRNA(Tyr) + AMP + diphosphate + H(+). Catalyzes the attachment of tyrosine to tRNA(Tyr) in a two-step reaction: tyrosine is first activated by ATP to form Tyr-AMP and then transferred to the acceptor end of tRNA(Tyr). The chain is Tyrosine--tRNA ligase from Shigella flexneri serotype 5b (strain 8401).